Here is a 68-residue protein sequence, read N- to C-terminus: Large ribosomal subunit protein uL29 (68 aa).

This sequence belongs to the universal ribosomal protein uL29 family.

The polypeptide is Large ribosomal subunit protein uL29 (Bradyrhizobium sp. (strain BTAi1 / ATCC BAA-1182)).